Here is a 672-residue protein sequence, read N- to C-terminus: MNNKYLLTTALAYTNGPLHLGHARSTYIPADIIKRYLKLKGNDVIHVGGTDNHGVPITLTAEKEGVKPEDIVNKYHNEIKRDLDNLSVEFDSYGKTHSDTHIQNAQEFYKKLKENGYIYEKEIEQFYCPDCDKFLADRYVEGSCPFCEGEARGDHCEVCGRHLEPTELVNPYCVICNATPQLKKTTHYFFKLSALSDNLDNYVKNSNMPDHIKNMAYSWIRELHDWDISRGIKWGVPIPDDENQVMYVWLEAPIGYISFTKMMGDIWKEYWLKNNDNNTENQNTKIWHFIGKDITVHHAVFWPGMLLGHGEYNLPNSIFSGGYLTLEGKKMSTSKKWVVWVDDFIKYFDSDYLRYFLMANAPLNRDCDFSFDEFQKRINTELIAIIANFTHRALVFSHRKFGALPVIDKPEEELNKEDLALLDKCSETIEKYNKNMMDCNLKDALVDIIHLAKEGNNYFQKMEPWTVDDENRLKQIMFVCGVITKHIAYLLYPFMPNKTNELLDLMNEEMDLEIRGNELKKPIVVFSKIENDTIKMVKEKLLKSENSKNTKNKKKNTKKNKNGEKMELIGIDDFAKIELKVAQILEAEEVPKSKKLLKLIVDIGDEKRQVVAGIKGHYTPEELIGKKIVLVCNLKPAKLCGVESQGMVLAAGDEEVALLSPEKDLPVGSTIC.

The 'HIGH' region signature appears at 12-22 (AYTNGPLHLGH). The Zn(2+) site is built by C144, C147, C156, and C159. Positions 330–334 (KMSTS) match the 'KMSKS' region motif. T333 serves as a coordination point for ATP. Positions 573-672 (DFAKIELKVA…KDLPVGSTIC (100 aa)) constitute a tRNA-binding domain.

It belongs to the class-I aminoacyl-tRNA synthetase family. MetG type 1 subfamily. In terms of assembly, homodimer. Zn(2+) is required as a cofactor.

Its subcellular location is the cytoplasm. The catalysed reaction is tRNA(Met) + L-methionine + ATP = L-methionyl-tRNA(Met) + AMP + diphosphate. In terms of biological role, is required not only for elongation of protein synthesis but also for the initiation of all mRNA translation through initiator tRNA(fMet) aminoacylation. In Methanococcus aeolicus (strain ATCC BAA-1280 / DSM 17508 / OCM 812 / Nankai-3), this protein is Methionine--tRNA ligase.